A 110-amino-acid chain; its full sequence is Large ribosomal subunit protein uL22 (110 aa).

This sequence belongs to the universal ribosomal protein uL22 family. Part of the 50S ribosomal subunit.

Its function is as follows. This protein binds specifically to 23S rRNA; its binding is stimulated by other ribosomal proteins, e.g. L4, L17, and L20. It is important during the early stages of 50S assembly. It makes multiple contacts with different domains of the 23S rRNA in the assembled 50S subunit and ribosome. Functionally, the globular domain of the protein is located near the polypeptide exit tunnel on the outside of the subunit, while an extended beta-hairpin is found that lines the wall of the exit tunnel in the center of the 70S ribosome. This is Large ribosomal subunit protein uL22 from Chromohalobacter salexigens (strain ATCC BAA-138 / DSM 3043 / CIP 106854 / NCIMB 13768 / 1H11).